We begin with the raw amino-acid sequence, 312 residues long: DNA primase small subunit PriS (312 aa).

Active-site residues include Asp-88, Asp-90, and Asp-215.

The protein belongs to the eukaryotic-type primase small subunit family. Heterodimer of a small subunit (PriS) and a large subunit (PriL). Mg(2+) is required as a cofactor. Requires Mn(2+) as cofactor.

Its function is as follows. Catalytic subunit of DNA primase, an RNA polymerase that catalyzes the synthesis of short RNA molecules used as primers for DNA polymerase during DNA replication. The small subunit contains the primase catalytic core and has DNA synthesis activity on its own. Binding to the large subunit stabilizes and modulates the activity, increasing the rate of DNA synthesis while decreasing the length of the DNA fragments, and conferring RNA synthesis capability. The DNA polymerase activity may enable DNA primase to also catalyze primer extension after primer synthesis. May also play a role in DNA repair. The chain is DNA primase small subunit PriS from Pyrobaculum calidifontis (strain DSM 21063 / JCM 11548 / VA1).